A 310-amino-acid polypeptide reads, in one-letter code: Methionyl-tRNA formyltransferase (310 aa).

111 to 114 (SILP) lines the (6S)-5,6,7,8-tetrahydrofolate pocket.

Belongs to the Fmt family.

The catalysed reaction is L-methionyl-tRNA(fMet) + (6R)-10-formyltetrahydrofolate = N-formyl-L-methionyl-tRNA(fMet) + (6S)-5,6,7,8-tetrahydrofolate + H(+). Its function is as follows. Attaches a formyl group to the free amino group of methionyl-tRNA(fMet). The formyl group appears to play a dual role in the initiator identity of N-formylmethionyl-tRNA by promoting its recognition by IF2 and preventing the misappropriation of this tRNA by the elongation apparatus. This is Methionyl-tRNA formyltransferase from Methylobacterium nodulans (strain LMG 21967 / CNCM I-2342 / ORS 2060).